The chain runs to 333 residues: 4-hydroxy-3-methylbut-2-enyl diphosphate reductase (333 aa).

C33 is a [4Fe-4S] cluster binding site. (2E)-4-hydroxy-3-methylbut-2-enyl diphosphate is bound by residues H62 and H95. Positions 62 and 95 each coordinate dimethylallyl diphosphate. Isopentenyl diphosphate contacts are provided by H62 and H95. C117 lines the [4Fe-4S] cluster pocket. (2E)-4-hydroxy-3-methylbut-2-enyl diphosphate is bound at residue H145. A dimethylallyl diphosphate-binding site is contributed by H145. Residue H145 participates in isopentenyl diphosphate binding. E147 (proton donor) is an active-site residue. T186 is a (2E)-4-hydroxy-3-methylbut-2-enyl diphosphate binding site. C216 lines the [4Fe-4S] cluster pocket. Residues S244, S245, N246, and S289 each coordinate (2E)-4-hydroxy-3-methylbut-2-enyl diphosphate. Residues S244, S245, N246, and S289 each contribute to the dimethylallyl diphosphate site. Isopentenyl diphosphate-binding residues include S244, S245, N246, and S289.

Belongs to the IspH family. [4Fe-4S] cluster serves as cofactor.

It carries out the reaction isopentenyl diphosphate + 2 oxidized [2Fe-2S]-[ferredoxin] + H2O = (2E)-4-hydroxy-3-methylbut-2-enyl diphosphate + 2 reduced [2Fe-2S]-[ferredoxin] + 2 H(+). It catalyses the reaction dimethylallyl diphosphate + 2 oxidized [2Fe-2S]-[ferredoxin] + H2O = (2E)-4-hydroxy-3-methylbut-2-enyl diphosphate + 2 reduced [2Fe-2S]-[ferredoxin] + 2 H(+). It participates in isoprenoid biosynthesis; dimethylallyl diphosphate biosynthesis; dimethylallyl diphosphate from (2E)-4-hydroxy-3-methylbutenyl diphosphate: step 1/1. The protein operates within isoprenoid biosynthesis; isopentenyl diphosphate biosynthesis via DXP pathway; isopentenyl diphosphate from 1-deoxy-D-xylulose 5-phosphate: step 6/6. Catalyzes the conversion of 1-hydroxy-2-methyl-2-(E)-butenyl 4-diphosphate (HMBPP) into a mixture of isopentenyl diphosphate (IPP) and dimethylallyl diphosphate (DMAPP). Acts in the terminal step of the DOXP/MEP pathway for isoprenoid precursor biosynthesis. The protein is 4-hydroxy-3-methylbut-2-enyl diphosphate reductase of Corynebacterium diphtheriae (strain ATCC 700971 / NCTC 13129 / Biotype gravis).